The sequence spans 59 residues: DNA gyrase inhibitor YacG (59 aa).

Zn(2+) contacts are provided by cysteine 9, cysteine 12, cysteine 27, and cysteine 31.

This sequence belongs to the DNA gyrase inhibitor YacG family. In terms of assembly, interacts with GyrB. Requires Zn(2+) as cofactor.

Functionally, inhibits all the catalytic activities of DNA gyrase by preventing its interaction with DNA. Acts by binding directly to the C-terminal domain of GyrB, which probably disrupts DNA binding by the gyrase. The sequence is that of DNA gyrase inhibitor YacG from Geotalea daltonii (strain DSM 22248 / JCM 15807 / FRC-32) (Geobacter daltonii).